Consider the following 445-residue polypeptide: 2-oxoisovalerate dehydrogenase subunit alpha, mitochondrial (445 aa).

Residues Met1–Phe45 constitute a mitochondrion transit peptide. Thiamine diphosphate is bound by residues Tyr158 and Arg159. Ser206 provides a ligand contact to K(+). Ser207 contacts thiamine diphosphate. The K(+) site is built by Pro208, Thr211, and Gln212. Glu238 serves as a coordination point for Mg(2+). Residues Gly239, Ala240, and Arg265 each coordinate thiamine diphosphate. Asn267 and Tyr269 together coordinate Mg(2+). His336 lines the thiamine diphosphate pocket. Position 337 is a phosphoserine; by BCKDK (Ser337). Position 338 is a phosphothreonine (Thr338). Residues Ser339 and Ser347 each carry the phosphoserine modification. An N6-acetyllysine; alternate modification is found at Lys356. An N6-succinyllysine; alternate modification is found at Lys356. N6-succinyllysine is present on Lys380.

This sequence belongs to the BCKDHA family. In terms of assembly, heterotetramer of 2 alpha/BCKDHA and 2 beta chains/BCKDHB that forms the branched-chain alpha-keto acid decarboxylase (E1) component of the BCKD complex. The branched-chain alpha-ketoacid dehydrogenase is a large complex composed of three major building blocks E1, E2 and E3. It is organized around E2, a 24-meric cubic core composed of DBT, to which are associated 6 to 12 copies of E1, and approximately 6 copies of the dehydrogenase E3, a DLD dimer. Interacts with PPM1K. The cofactor is thiamine diphosphate. Requires Mg(2+) as cofactor. Phosphorylated at Ser-337 by BCKDK and dephosphorylated by protein phosphatase PPM1K.

The protein localises to the mitochondrion matrix. The enzyme catalyses N(6)-[(R)-lipoyl]-L-lysyl-[protein] + 3-methyl-2-oxobutanoate + H(+) = N(6)-[(R)-S(8)-2-methylpropanoyldihydrolipoyl]-L-lysyl-[protein] + CO2. Together with BCKDHB forms the heterotetrameric E1 subunit of the mitochondrial branched-chain alpha-ketoacid dehydrogenase (BCKD) complex. The BCKD complex catalyzes the multi-step oxidative decarboxylation of alpha-ketoacids derived from the branched-chain amino-acids valine, leucine and isoleucine producing CO2 and acyl-CoA which is subsequently utilized to produce energy. The E1 subunit catalyzes the first step with the decarboxylation of the alpha-ketoacid forming an enzyme-product intermediate. A reductive acylation mediated by the lipoylamide cofactor of E2 extracts the acyl group from the E1 active site for the next step of the reaction. In Macaca fascicularis (Crab-eating macaque), this protein is 2-oxoisovalerate dehydrogenase subunit alpha, mitochondrial (BCKDHA).